Consider the following 536-residue polypeptide: MSYSIGIDFGTASGRVILADTSNGHIISRYEEDYANGTYMNSLYDKPLPENYFLQNADDYLQILEQGVQFVLEDSKVNKNDVVGIGVDFTSSTIIFLDEQFEPLHRHEDLKTNPHAYVKLWKHHGAQDEANYMIQMSKNKNWLDYYGSSVNSEWMIPKILEVKHEAPEILRRARYIMEAGDYITSILTNSNIRSNCGIGFKGFWDNEAGFNYDFFHSVDPDLPKIVKEKCEAPIISIGESAGRLCKDYQQIWGLSQDVQVSPFIIDAHSGVLGVGAIEAGEFTAVIGTSTCHLMLDSRQVPISSITGSVKNAIIPGLYAYEAGQPAVGDLFEYSKNQAPKHIVDQANEHHMPVLNYLEELASHIRIEEQHVVVLDWLNGNRSILSNSHLTGSIFGLTLQTPYEMIHRAYIEATAFGTKLIMKQFEDNHIPVHTVYASGGIPQKSKLLVEIYANVLNKRVVVIDSSNASALGAAMLGANVGNAYSTLKEAALSMKQPIAYIQEPEIQKVQAYKPLYHKYCELHDLLGRQYPELSYLI.

Belongs to the ribulokinase family.

The catalysed reaction is D-ribulose + ATP = D-ribulose 5-phosphate + ADP + H(+). The enzyme catalyses L-ribulose + ATP = L-ribulose 5-phosphate + ADP + H(+). It participates in carbohydrate degradation; L-arabinose degradation via L-ribulose; D-xylulose 5-phosphate from L-arabinose (bacterial route): step 2/3. In Staphylococcus epidermidis (strain ATCC 12228 / FDA PCI 1200), this protein is Ribulokinase.